The sequence spans 182 residues: Lipoprotein signal peptidase (182 aa).

Transmembrane regions (helical) follow at residues 12–32, 40–60, 70–90, and 97–117; these read FLWI…TVID, IQVL…AFSF, WFFT…LKQS, and LPVA…DRLV. Catalysis depends on residues Asp123 and Asp141. Residues 136–156 traverse the membrane as a helical segment; sequence AFNIADSAIFIGAALLIIDMF. The disordered stretch occupies residues 161–182; that stretch reads KKSEENGAESKAGSANSSETIK. Over residues 173-182 the composition is skewed to polar residues; it reads GSANSSETIK.

It belongs to the peptidase A8 family.

The protein resides in the cell inner membrane. It carries out the reaction Release of signal peptides from bacterial membrane prolipoproteins. Hydrolyzes -Xaa-Yaa-Zaa-|-(S,diacylglyceryl)Cys-, in which Xaa is hydrophobic (preferably Leu), and Yaa (Ala or Ser) and Zaa (Gly or Ala) have small, neutral side chains.. It participates in protein modification; lipoprotein biosynthesis (signal peptide cleavage). In terms of biological role, this protein specifically catalyzes the removal of signal peptides from prolipoproteins. This Alteromonas mediterranea (strain DSM 17117 / CIP 110805 / LMG 28347 / Deep ecotype) protein is Lipoprotein signal peptidase.